The primary structure comprises 367 residues: Dual specificity protein phosphatase 1 (367 aa).

The Rhodanese domain maps to 20–137; the sequence is RAAQCLLLDC…FSASCPELCS (118 aa). The Tyrosine-protein phosphatase domain maps to 173 to 314; it reads GPVEILPFLY…LLQFESQVLA (142 aa). Catalysis depends on cysteine 258, which acts as the Phosphocysteine intermediate. Residues serine 359 and serine 364 each carry the phosphoserine; by MAPK1 and MAPK3 modification.

It belongs to the protein-tyrosine phosphatase family. Non-receptor class dual specificity subfamily. Post-translationally, phosphorylation at Ser-359 and Ser-364 by MAPK1/ERK2 and MAPK3/ERK1 reduces its rate of degradation. 'Lys-48'-linked polyubiquitinated by NEURL3, leading to proteasomal degradation. As to expression, expressed at high levels in the lung, liver placenta and pancreas. Moderate levels seen in the heart and skeletal muscle. Lower levels found in the brain and kidney.

The protein resides in the nucleus. It catalyses the reaction O-phospho-L-tyrosyl-[protein] + H2O = L-tyrosyl-[protein] + phosphate. It carries out the reaction O-phospho-L-seryl-[protein] + H2O = L-seryl-[protein] + phosphate. The enzyme catalyses O-phospho-L-threonyl-[protein] + H2O = L-threonyl-[protein] + phosphate. In terms of biological role, dual specificity phosphatase that dephosphorylates MAP kinase MAPK1/ERK2 on both 'Thr-183' and 'Tyr-185', regulating its activity during the meiotic cell cycle. The sequence is that of Dual specificity protein phosphatase 1 from Homo sapiens (Human).